The sequence spans 227 residues: Probable minor pilin MMP0600 (227 aa).

Residues 1–7 (MAKFSKG) constitute a propeptide that is removed on maturation. Residues 8 to 16 (QISIELILL) carry the QXSXEXXXL motif.

Post-translationally, the N-terminus is probably cleaved by the prepilin peptidase EppA, which recognizes the class III signal sequence.

The protein localises to the secreted. It is found in the cell surface. The protein resides in the fimbrium. The chain is Probable minor pilin MMP0600 from Methanococcus maripaludis (strain DSM 14266 / JCM 13030 / NBRC 101832 / S2 / LL).